The following is a 505-amino-acid chain: L-carnitine/gamma-butyrobetaine antiporter (505 aa).

12 helical membrane-spanning segments follow: residues 10-30, 51-71, 92-112, 143-163, 195-215, 231-251, 263-283, 316-336, 347-367, 403-423, 446-466, and 475-495; these read IEPK…WLTV, WGWA…WLVF, IFMM…SIEI, GPLP…FFFV, FYLV…TPLV, LDAI…ACGL, SYLS…SFIM, WTVF…IFLA, LCFG…TVLG, LSTA…VTLI, LLVR…LLAL, and AIIA…LSFI.

This sequence belongs to the BCCT transporter (TC 2.A.15) family. CaiT subfamily. In terms of assembly, homotrimer.

The protein localises to the cell inner membrane. It catalyses the reaction 4-(trimethylamino)butanoate(in) + (R)-carnitine(out) = 4-(trimethylamino)butanoate(out) + (R)-carnitine(in). Its pathway is amine and polyamine metabolism; carnitine metabolism. In terms of biological role, catalyzes the exchange of L-carnitine for gamma-butyrobetaine. The polypeptide is L-carnitine/gamma-butyrobetaine antiporter (Salmonella paratyphi A (strain ATCC 9150 / SARB42)).